We begin with the raw amino-acid sequence, 123 residues long: Large ribosomal subunit protein uL29 (123 aa).

Belongs to the universal ribosomal protein uL29 family.

The protein is Large ribosomal subunit protein uL29 (RPL35) of Theileria parva (East coast fever infection agent).